A 435-amino-acid polypeptide reads, in one-letter code: MQINNESKGIRINPMGRIQGEIEVPGDKSISHRAALFGGMAQGETHITNFLLGQDCLSTLACLKTLGVEWERRDAEVWIRGRGFENWHEPQDILDVGNSGTTMRLMLGVLAGCPFSATLTGDSSIRSRPMARVTLPLQEMGARILGRQEGKYAPLTIQGGLLQGIQFRSPVASAQVKSAILLAGLRAKGETMVTEPCLSRDHTERMLRGFGVDLKSEGRTAKVRGGAALSGQEVAVPGDISSAAFFLVLGTLIPQGELLIKNVGMNPTRTGILDALWQMGADIQVEEEREECGEPRANLRVRPAQLHGIEIQGEMIPKLIDEVPVLAVAASLAQGETVIRDAAELRVKETDRIQTVVQGLQALGANAQELPDGLRIQGAKSLRGGAAHSHGDHRLAMAWVVAGLLAEEGISLQGIEAAEVSFPNFLELIHEIAES.

Residues Lys28, Ser29, and Arg33 each coordinate 3-phosphoshikimate. Lys28 lines the phosphoenolpyruvate pocket. Positions 100 and 128 each coordinate phosphoenolpyruvate. 3-phosphoshikimate-binding residues include Ser173, Gln175, Asp321, and Lys348. A phosphoenolpyruvate-binding site is contributed by Gln175. The Proton acceptor role is filled by Asp321. Phosphoenolpyruvate-binding residues include Arg352 and Arg394.

Belongs to the EPSP synthase family. As to quaternary structure, monomer.

It is found in the cytoplasm. It carries out the reaction 3-phosphoshikimate + phosphoenolpyruvate = 5-O-(1-carboxyvinyl)-3-phosphoshikimate + phosphate. It functions in the pathway metabolic intermediate biosynthesis; chorismate biosynthesis; chorismate from D-erythrose 4-phosphate and phosphoenolpyruvate: step 6/7. Functionally, catalyzes the transfer of the enolpyruvyl moiety of phosphoenolpyruvate (PEP) to the 5-hydroxyl of shikimate-3-phosphate (S3P) to produce enolpyruvyl shikimate-3-phosphate and inorganic phosphate. This is 3-phosphoshikimate 1-carboxyvinyltransferase from Desulfitobacterium hafniense (strain DSM 10664 / DCB-2).